Reading from the N-terminus, the 197-residue chain is Imidazoleglycerol-phosphate dehydratase (197 aa).

This sequence belongs to the imidazoleglycerol-phosphate dehydratase family.

The protein localises to the cytoplasm. It carries out the reaction D-erythro-1-(imidazol-4-yl)glycerol 3-phosphate = 3-(imidazol-4-yl)-2-oxopropyl phosphate + H2O. It participates in amino-acid biosynthesis; L-histidine biosynthesis; L-histidine from 5-phospho-alpha-D-ribose 1-diphosphate: step 6/9. This Bradyrhizobium sp. (strain BTAi1 / ATCC BAA-1182) protein is Imidazoleglycerol-phosphate dehydratase.